Here is a 135-residue protein sequence, read N- to C-terminus: Large ribosomal subunit protein uL18c (135 aa).

It belongs to the universal ribosomal protein uL18 family. In terms of assembly, part of the 50S ribosomal subunit; contacts the 5S rRNA.

The protein localises to the plastid. It is found in the chloroplast. Its function is as follows. Binds 5S rRNA, forms part of the central protuberance of the 50S subunit. The chain is Large ribosomal subunit protein uL18c (rpl18) from Phaeodactylum tricornutum (strain CCAP 1055/1).